We begin with the raw amino-acid sequence, 523 residues long: ADP-ribosylation factor GTPase-activating protein 3 (523 aa).

The region spanning 10–126 is the Arf-GAP domain; the sequence is LAIFKRLRSV…IKTLATQATR (117 aa). The segment at 25–48 adopts a C4-type zinc-finger fold; that stretch reads CFDCGAKNPSWASISYGVFLCIDC. Residues 162 to 206 are disordered; sequence GAMQASAQPESASSTPWGLETTPEKHEGGPGQGPSVEGLNTPGKA. Over residues 164-177 the composition is skewed to polar residues; that stretch reads MQASAQPESASSTP. Ser231 and Ser241 each carry phosphoserine. The segment at 248-269 is disordered; it reads QAQAVDKRKEQEDLARGAPKEE. Phosphoserine occurs at positions 270, 274, and 331. The disordered stretch occupies residues 308–424; the sequence is GFGSCRSGIS…YEPIGSTDEA (117 aa). A compositionally biased stretch (polar residues) spans 314–332; sequence SGISHSVTSDMQTIEQESP. Over residues 348-361 the composition is skewed to low complexity; sequence SYFSSSSKWSEQSS. Ser377 carries the post-translational modification Phosphoserine. Over residues 385 to 396 the composition is skewed to basic and acidic residues; the sequence is YWKKDSSRDPEP. Residues Ser435, Ser458, Ser460, Ser462, Ser464, and Ser465 each carry the phosphoserine modification.

It localises to the cytoplasm. The protein localises to the golgi apparatus membrane. With respect to regulation, GAP activity stimulated by phosphatidylinositol 4,5-bisphosphate (PIP2). Functionally, GTPase-activating protein (GAP) for ADP ribosylation factor 1 (ARF1). Hydrolysis of ARF1-bound GTP may lead to dissociation of coatomer from Golgi-derived membranes to allow fusion with target membranes. This chain is ADP-ribosylation factor GTPase-activating protein 3 (Arfgap3), found in Mus musculus (Mouse).